The chain runs to 182 residues: CD-NTase-associated protein 15 (182 aa).

2 helical membrane passes run 11 to 31 (ITGWFTVIFFLLLIIVSCTVW) and 33 to 53 (IGWIDIISYTVTISTFITIGY).

This sequence belongs to the CBASS Cap15 membrane effector family. In terms of assembly, the beta barrel domain oligomerizes; in the presence of cyclic nucleotides (probably 3',2'-cGAMP) higher-level oligomers occur.

Its subcellular location is the cell membrane. Its function is as follows. Effector protein of a CBASS antivirus system. CBASS (cyclic oligonucleotide-based antiphage signaling system) provides immunity against bacteriophage. The CD-NTase protein (CdnE) synthesizes cyclic nucleotides in response to infection; these serve as specific second messenger signals. The signals activate a diverse range of effectors, leading to bacterial cell death and thus abortive phage infection. This system triggers membrane disruption without lysis. A type I-B CBASS system. Binds cyclic nucleotide second messenger 3',2'-cGAMP, probably oligomerizing, and induces cell membrane shrinkage and rupture, leading to cell death. Protects S.aureus against phage infection. When the CBASS operon (cdnE-cap15) is introduced in S.aureus strain RN4220 there is strong protection against lytic DNA phages 80alpha-vir and phi-NM1-gamma-6 but little to no protection against phages phi-NM4-gamma-4 or phi-12-gamma-3. The polypeptide is CD-NTase-associated protein 15 (Staphylococcus schleiferi).